The primary structure comprises 466 residues: Glutamate--tRNA ligase (466 aa).

A 'HIGH' region motif is present at residues 10–20 (PSPTGYLHIGG). Positions 237–241 (RLSKR) match the 'KMSKS' region motif. Lys240 is an ATP binding site.

Belongs to the class-I aminoacyl-tRNA synthetase family. Glutamate--tRNA ligase type 1 subfamily. Monomer.

It is found in the cytoplasm. The enzyme catalyses tRNA(Glu) + L-glutamate + ATP = L-glutamyl-tRNA(Glu) + AMP + diphosphate. Functionally, catalyzes the attachment of glutamate to tRNA(Glu) in a two-step reaction: glutamate is first activated by ATP to form Glu-AMP and then transferred to the acceptor end of tRNA(Glu). This Syntrophotalea carbinolica (strain DSM 2380 / NBRC 103641 / GraBd1) (Pelobacter carbinolicus) protein is Glutamate--tRNA ligase.